A 440-amino-acid chain; its full sequence is Chromosome partition protein MukF (440 aa).

The leucine-zipper stretch occupies residues 208-236 (LSETSGTLRELQDTLEAAGDKLQANLLRI).

Belongs to the MukF family. Interacts, and probably forms a ternary complex, with MukE and MukB via its C-terminal region. The complex formation is stimulated by calcium or magnesium. It is required for an interaction between MukE and MukB.

Its subcellular location is the cytoplasm. The protein resides in the nucleoid. In terms of biological role, involved in chromosome condensation, segregation and cell cycle progression. May participate in facilitating chromosome segregation by condensation DNA from both sides of a centrally located replisome during cell division. Not required for mini-F plasmid partitioning. Probably acts via its interaction with MukB and MukE. Overexpression results in anucleate cells. It has a calcium binding activity. This chain is Chromosome partition protein MukF, found in Yersinia enterocolitica serotype O:8 / biotype 1B (strain NCTC 13174 / 8081).